Here is a 975-residue protein sequence, read N- to C-terminus: Importin-11 (975 aa).

At M1 the chain carries N-acetylmethionine. The 73-residue stretch at A28–E100 folds into the Importin N-terminal domain. 14 HEAT repeats span residues R123–S160, Q283–I317, V318–F356, Q422–L459, W473–K509, D511–F548, P555–V593, G600–A636, N640–N677, P683–E720, Q731–C773, Q819–A849, L850–E887, and M957–G974. S343 is subject to Phosphoserine.

This sequence belongs to the importin beta family. Interacts with UBE2E3 and RPL12.

The protein localises to the cytoplasm. Its subcellular location is the nucleus. Functions in nuclear protein import as nuclear transport receptor. Serves as receptor for nuclear localization signals (NLS) in cargo substrates. Is thought to mediate docking of the importin/substrate complex to the nuclear pore complex (NPC) through binding to nucleoporin and the complex is subsequently translocated through the pore by an energy requiring, Ran-dependent mechanism. At the nucleoplasmic side of the NPC, Ran binds to the importin, the importin/substrate complex dissociates and importin is re-exported from the nucleus to the cytoplasm where GTP hydrolysis releases Ran. The directionality of nuclear import is thought to be conferred by an asymmetric distribution of the GTP- and GDP-bound forms of Ran between the cytoplasm and nucleus. Mediates the nuclear import of RPL12, and of UBE2E3. This is Importin-11 (Ipo11) from Mus musculus (Mouse).